The following is a 181-amino-acid chain: Putative poly [ADP-ribose] polymerase-like 100L (181 aa).

Residues Met-1–Lys-181 enclose the PARP catalytic domain.

It catalyses the reaction NAD(+) + (ADP-D-ribosyl)n-acceptor = nicotinamide + (ADP-D-ribosyl)n+1-acceptor + H(+).. The polypeptide is Putative poly [ADP-ribose] polymerase-like 100L (Invertebrate iridescent virus 6 (IIV-6)).